A 116-amino-acid chain; its full sequence is Host cell factor C1 regulator 1 (116 aa).

The interval 1–22 (MILQQPLERGPPGRDPRATTGV) is disordered. Residues 54–57 (DHPY) are interaction with HCFC1. Positions 88–97 (IPEALRLLRL) match the Nuclear export signal motif.

In terms of assembly, interacts with HCFC1.

It localises to the cytoplasm. The protein localises to the nucleus. In terms of biological role, regulates HCFC1 activity by modulating its subcellular localization. Overexpression of HCFC1R1 leads to accumulation of HCFC1 in the cytoplasm. HCFC1R1-mediated export may provide the pool of cytoplasmic HCFC1 required for import of virion-derived VP16 into the nucleus. This Rattus norvegicus (Rat) protein is Host cell factor C1 regulator 1 (Hcfc1r1).